Here is a 343-residue protein sequence, read N- to C-terminus: tRNA N6-adenosine threonylcarbamoyltransferase (343 aa).

Fe cation is bound by residues histidine 115 and histidine 119. Substrate-binding positions include 138–142, aspartate 171, glycine 184, and asparagine 276; that span reads LVSGA. Aspartate 304 is a binding site for Fe cation.

The protein belongs to the KAE1 / TsaD family. The cofactor is Fe(2+).

The protein localises to the cytoplasm. It carries out the reaction L-threonylcarbamoyladenylate + adenosine(37) in tRNA = N(6)-L-threonylcarbamoyladenosine(37) in tRNA + AMP + H(+). Functionally, required for the formation of a threonylcarbamoyl group on adenosine at position 37 (t(6)A37) in tRNAs that read codons beginning with adenine. Is involved in the transfer of the threonylcarbamoyl moiety of threonylcarbamoyl-AMP (TC-AMP) to the N6 group of A37, together with TsaE and TsaB. TsaD likely plays a direct catalytic role in this reaction. This chain is tRNA N6-adenosine threonylcarbamoyltransferase, found in Buchnera aphidicola subsp. Cinara cedri (strain Cc).